The chain runs to 435 residues: Monodehydroascorbate reductase 2 (435 aa).

FAD contacts are provided by residues 14–17 (GGVA), E41, R48, K53, I96, and 147–148 (RE). Residues 172-178 (GGYIGLE), E196, R202, and G261 contribute to the NAD(+) site. 174-178 (YIGLE) is an NADP(+) binding site. The NADP(+) site is built by R202 and G261. D298 provides a ligand contact to FAD. 314–315 (EH) provides a ligand contact to NAD(+). 314–315 (EH) is an NADP(+) binding site. An FAD-binding site is contributed by V316. L-ascorbate is bound at residue R320. Y349 serves as a coordination point for FAD. Y349 serves as a coordination point for NAD(+). Residue Y349 participates in NADP(+) binding. R351 contributes to the L-ascorbate binding site. S417 bears the Phosphoserine mark.

This sequence belongs to the FAD-dependent oxidoreductase family. FAD serves as cofactor.

It is found in the cytoplasm. The enzyme catalyses 2 monodehydro-L-ascorbate radical + NADH + H(+) = 2 L-ascorbate + NAD(+). Functionally, catalyzes the conversion of monodehydroascorbate to ascorbate, oxidizing NADH in the process. The sequence is that of Monodehydroascorbate reductase 2 from Arabidopsis thaliana (Mouse-ear cress).